Reading from the N-terminus, the 363-residue chain is Alanine racemase (363 aa).

Residue Lys-34 is the Proton acceptor; specific for D-alanine of the active site. Lys-34 bears the N6-(pyridoxal phosphate)lysine mark. Substrate is bound at residue Arg-129. The active-site Proton acceptor; specific for L-alanine is the Tyr-256. Position 304 (Met-304) interacts with substrate.

It belongs to the alanine racemase family. Pyridoxal 5'-phosphate is required as a cofactor.

It carries out the reaction L-alanine = D-alanine. Its pathway is amino-acid biosynthesis; D-alanine biosynthesis; D-alanine from L-alanine: step 1/1. Functionally, catalyzes the interconversion of L-alanine and D-alanine. May also act on other amino acids. The polypeptide is Alanine racemase (alr) (Edwardsiella ictaluri (strain 93-146)).